Reading from the N-terminus, the 355-residue chain is MPARGKISVLIVDDSGMARAMLRSIFEDEDDFDVVAEAVNGREAIEMVRHLRPGLVTMDLEMPEMGGLEAIEEIMCSKAVPILVVSGVADAQKAFGAMSRGAVDVVAKPNVTSAREVEDFVDKARLVAKIPVITVPRTRSAPAAGPTPVPQAPPPPAAPPAGDGGIIAIAASTGGPQALAALLAAIGRPLSCPMVVAQHISDGFASGMADWLNSISAMPVRLAAEGERLTAGTVYLSPSEWNMSVTESRHIALALRPERQVYRPSCDALLTSVAQVAGRRAVGVILTGMGSDGVAGMEAISKAGGTTLGQDEGSSVIFGMNAIAIERGWVQRVLPLAELAASLLEITGASVGAAP.

The region spanning 8-123 (SVLIVDDSGM…AREVEDFVDK (116 aa)) is the Response regulatory domain. Residue Asp-59 is modified to 4-aspartylphosphate. The interval 139-161 (RSAPAAGPTPVPQAPPPPAAPPA) is disordered. Positions 145–159 (GPTPVPQAPPPPAAP) are enriched in pro residues. The region spanning 160–350 (PAGDGGIIAI…ASLLEITGAS (191 aa)) is the CheB-type methylesterase domain. Residues Ser-172, His-199, and Asp-292 contribute to the active site.

The protein belongs to the CheB family. Phosphorylated by CheA. Phosphorylation of the N-terminal regulatory domain activates the methylesterase activity.

It localises to the cytoplasm. It catalyses the reaction [protein]-L-glutamate 5-O-methyl ester + H2O = L-glutamyl-[protein] + methanol + H(+). It carries out the reaction L-glutaminyl-[protein] + H2O = L-glutamyl-[protein] + NH4(+). In terms of biological role, involved in chemotaxis. Part of a chemotaxis signal transduction system that modulates chemotaxis in response to various stimuli. Catalyzes the demethylation of specific methylglutamate residues introduced into the chemoreceptors (methyl-accepting chemotaxis proteins or MCP) by CheR. Also mediates the irreversible deamidation of specific glutamine residues to glutamic acid. The sequence is that of Protein-glutamate methylesterase/protein-glutamine glutaminase 3 from Paramagnetospirillum magneticum (strain ATCC 700264 / AMB-1) (Magnetospirillum magneticum).